We begin with the raw amino-acid sequence, 335 residues long: Probable calcium-binding protein CML49 (335 aa).

Over residues 1-10 (MSGYPPSSQG) the composition is skewed to low complexity. The tract at residues 1 to 154 (MSGYPPSSQG…PQASYGSPFA (154 aa)) is disordered. Residues 30–45 (NPPPYGSSGSNPPPPY) are compositionally biased toward pro residues. A compositionally biased stretch (low complexity) spans 46 to 63 (GSSASSPYAVPYGAQPAP). Over residues 110–141 (DYGGYGGAPQQSGHGGGYGGAPQQSGHGGGYG) the composition is skewed to gly residues. 2 consecutive EF-hand domains span residues 164–199 (GTDP…YNQS) and 230–265 (FSLQ…LGFS). Positions 177, 179, 181, 188, 243, 245, 247, 249, and 254 each coordinate Ca(2+).

Its function is as follows. Potential calcium sensor. This Arabidopsis thaliana (Mouse-ear cress) protein is Probable calcium-binding protein CML49 (CML49).